Here is a 256-residue protein sequence, read N- to C-terminus: Fibroblast growth factor 3 (256 aa).

Residues 1–18 form the signal peptide; the sequence is MVIILLLLLLSFLDPSLE. 3 disordered regions span residues 31 to 54, 151 to 176, and 219 to 256; these read APCA…GGVY, RHHA…SSKR, and LRES…RADI. The segment covering 238–256 has biased composition (basic residues); it reads ERRRRRHRGSKGHNRRADI.

The protein belongs to the heparin-binding growth factors family.

The protein resides in the secreted. Its function is as follows. Plays an important role in the regulation of embryonic development, cell proliferation, and cell differentiation. The protein is Fibroblast growth factor 3 (fgf3) of Danio rerio (Zebrafish).